A 566-amino-acid chain; its full sequence is Chromatin assembly factor 1 subunit B (566 aa).

6 WD repeats span residues 11 to 54 (HNKE…DGKA), 64 to 103 (RHTK…ELEP), 127 to 166 (GHLE…KVSI), 169 to 208 (EHKS…VAFN), 228 to 279 (FHDD…RPMG), and 351 to 392 (IHYH…IPLK). Disordered stretches follow at residues 411–481 (KSQP…NQPR) and 501–566 (IPLK…KPNK). 2 stretches are compositionally biased toward polar residues: residues 425–437 (TEGT…TLQP) and 469–478 (QPASQSTKVN).

Belongs to the WD repeat HIR1 family. As to quaternary structure, interacts with CHAF1A.

Its subcellular location is the nucleus. Acts as a component of the histone chaperone complex chromatin assembly factor 1 (CAF-1), which assembles histone octamers onto DNA during replication and repair. CAF-1 performs the first step of the nucleosome assembly process, bringing newly synthesized histones H3 and H4 to replicating DNA; histones H2A/H2B can bind to this chromatin precursor subsequent to DNA replication to complete the histone octamer. The protein is Chromatin assembly factor 1 subunit B (CHAF1B) of Gallus gallus (Chicken).